Here is a 478-residue protein sequence, read N- to C-terminus: MTRIKINARRIFSLLIPFFFFTSVHAEQTAAPAKPVTVEAKNETFAPQHPDQYLSWKATSEQSERVDALAEDPRLVILWAGYPFSRDYNKPRGHAFAVTDVRETLRTGAPKNAEDGPLPMACWSCKSPDVARLIQKDGEDGYFHGKWARGGPEIVNNLGCADCHNTASPEFAKGKPELTLSRPYAARAMEAIGKPFEKAGRFDQQSMVCGQCHVEYYFDGKNKAVKFPWDDGMKVENMEQYYDKIAFSDWTNSLSKTPMLKAQHPEYETWTAGIHGKNNVTCIDCHMPKVQNAEGKLYTDHKIGNPFDNFAQTCANCHTQDKAALQKVVAERKQSINDLKIKVEDQLVHAHFEAKAALDAGATEAEMKPIQDDIRHAQWRWDLAIASHGIHMHAPEEGLRMLGTAMDKAADARTKLARLLATKGITHEIQIPDISTKEKAQQAIGLNMEQIKAEKQDFIKTVIPQWEEQARKNGLLSQ.

A signal peptide spans 1–26 (MTRIKINARRIFSLLIPFFFFTSVHA). H94 serves as a coordination point for heme c. The heme site is built by C122, C125, and K126. Heme c contacts are provided by C160, C163, H164, C209, C212, and H213. The Ca(2+) site is built by E215, Y216, K261, and Q263. Y216 serves as a coordination point for substrate. Substrate is bound at residue H264. Heme c contacts are provided by H275, C282, C285, H286, H301, C314, C317, H318, and H393.

Belongs to the cytochrome c-552 family. Ca(2+) serves as cofactor. The cofactor is heme c.

It localises to the periplasm. It carries out the reaction 6 Fe(III)-[cytochrome c] + NH4(+) + 2 H2O = 6 Fe(II)-[cytochrome c] + nitrite + 8 H(+). Its pathway is nitrogen metabolism; nitrate reduction (assimilation). In terms of biological role, catalyzes the reduction of nitrite to ammonia, consuming six electrons in the process. The polypeptide is Cytochrome c-552 (Escherichia coli (strain ATCC 8739 / DSM 1576 / NBRC 3972 / NCIMB 8545 / WDCM 00012 / Crooks)).